Here is a 207-residue protein sequence, read N- to C-terminus: Superoxide dismutase [Mn] (207 aa).

H28, H76, D160, and H164 together coordinate Mn(2+).

It belongs to the iron/manganese superoxide dismutase family. It depends on Mn(2+) as a cofactor.

The enzyme catalyses 2 superoxide + 2 H(+) = H2O2 + O2. Its function is as follows. Destroys superoxide anion radicals which are normally produced within the cells and which are toxic to biological systems. The sequence is that of Superoxide dismutase [Mn] (sodA) from Mycobacterium leprae (strain TN).